A 188-amino-acid polypeptide reads, in one-letter code: Photosystem I assembly protein Ycf4 (188 aa).

A run of 2 helical transmembrane segments spans residues 26–46 (YFWAIAVSVGGTGLLLAGLSS) and 68–88 (LVMGLYGIAAILLASYLWFVI).

It belongs to the Ycf4 family.

Its subcellular location is the cellular thylakoid membrane. Seems to be required for the assembly of the photosystem I complex. This chain is Photosystem I assembly protein Ycf4, found in Synechococcus elongatus (strain ATCC 33912 / PCC 7942 / FACHB-805) (Anacystis nidulans R2).